We begin with the raw amino-acid sequence, 275 residues long: MNVFENFWTIVHYFVLGLVQGITEPIPISSSGHIIIFRELFGIEARGLSFEIFVNLASLLAVLIIYRKDIVRLAVNSWNFIFKQEKESKSDFMFVVYLVLATIPVGIVGVLFGDEIGAFIGEDGTTVVGITLLITAAAIWMIRNLRGRKIEGDLSTKDAVIVGLAQAVAVTPGISRSGATLVASMLMGMKQDTALRFSFLLYIPVSLGSSILEIPNIVRDPNVQELWIPYLVAFITAFIASYFALKWFMNIMRHGNLKYFAYYCVIVGVLVLIFL.

The next 7 membrane-spanning stretches (helical) occupy residues 8-28, 45-65, 92-112, 119-139, 197-217, 225-245, and 255-275; these read WTIV…PIPI, ARGL…VLII, FMFV…GVLF, FIGE…AAAI, FSFL…IPNI, ELWI…YFAL, and GNLK…LIFL.

It belongs to the UppP family.

The protein localises to the cell membrane. It catalyses the reaction di-trans,octa-cis-undecaprenyl diphosphate + H2O = di-trans,octa-cis-undecaprenyl phosphate + phosphate + H(+). Its function is as follows. Catalyzes the dephosphorylation of undecaprenyl diphosphate (UPP). Confers resistance to bacitracin. This is Undecaprenyl-diphosphatase from Oceanobacillus iheyensis (strain DSM 14371 / CIP 107618 / JCM 11309 / KCTC 3954 / HTE831).